A 331-amino-acid polypeptide reads, in one-letter code: Anthranilate phosphoribosyltransferase (331 aa).

5-phospho-alpha-D-ribose 1-diphosphate is bound by residues G79, 82–83 (GD), S87, 89–92 (NIST), 107–115 (KHCNTSISS), and S119. G79 serves as a coordination point for anthranilate. Position 91 (S91) interacts with Mg(2+). N110 contacts anthranilate. Anthranilate is bound at residue R165. Mg(2+)-binding residues include D223 and E224.

This sequence belongs to the anthranilate phosphoribosyltransferase family. As to quaternary structure, homodimer. Requires Mg(2+) as cofactor.

It carries out the reaction N-(5-phospho-beta-D-ribosyl)anthranilate + diphosphate = 5-phospho-alpha-D-ribose 1-diphosphate + anthranilate. It participates in amino-acid biosynthesis; L-tryptophan biosynthesis; L-tryptophan from chorismate: step 2/5. Catalyzes the transfer of the phosphoribosyl group of 5-phosphorylribose-1-pyrophosphate (PRPP) to anthranilate to yield N-(5'-phosphoribosyl)-anthranilate (PRA). In Buchnera aphidicola subsp. Schlechtendalia chinensis, this protein is Anthranilate phosphoribosyltransferase.